We begin with the raw amino-acid sequence, 355 residues long: Holliday junction branch migration complex subunit RuvB (355 aa).

Residues 4-190 (TDKLAAERII…FGIVARLEFY (187 aa)) form a large ATPase domain (RuvB-L) region. ATP-binding positions include Leu-29, Arg-30, Gly-71, Lys-74, Thr-75, Thr-76, 137–139 (EDY), Arg-180, Tyr-190, and Arg-227. Thr-75 contacts Mg(2+). Residues 191–261 (DADQLARIVR…VADAALAMLD (71 aa)) are small ATPAse domain (RuvB-S). Residues 264 to 355 (PVGFDLMDRK…RGMWDTPAGK (92 aa)) are head domain (RuvB-H). 3 residues coordinate DNA: Arg-300, Arg-319, and Arg-324.

The protein belongs to the RuvB family. As to quaternary structure, homohexamer. Forms an RuvA(8)-RuvB(12)-Holliday junction (HJ) complex. HJ DNA is sandwiched between 2 RuvA tetramers; dsDNA enters through RuvA and exits via RuvB. An RuvB hexamer assembles on each DNA strand where it exits the tetramer. Each RuvB hexamer is contacted by two RuvA subunits (via domain III) on 2 adjacent RuvB subunits; this complex drives branch migration. In the full resolvosome a probable DNA-RuvA(4)-RuvB(12)-RuvC(2) complex forms which resolves the HJ.

The protein resides in the cytoplasm. The enzyme catalyses ATP + H2O = ADP + phosphate + H(+). Its function is as follows. The RuvA-RuvB-RuvC complex processes Holliday junction (HJ) DNA during genetic recombination and DNA repair, while the RuvA-RuvB complex plays an important role in the rescue of blocked DNA replication forks via replication fork reversal (RFR). RuvA specifically binds to HJ cruciform DNA, conferring on it an open structure. The RuvB hexamer acts as an ATP-dependent pump, pulling dsDNA into and through the RuvAB complex. RuvB forms 2 homohexamers on either side of HJ DNA bound by 1 or 2 RuvA tetramers; 4 subunits per hexamer contact DNA at a time. Coordinated motions by a converter formed by DNA-disengaged RuvB subunits stimulates ATP hydrolysis and nucleotide exchange. Immobilization of the converter enables RuvB to convert the ATP-contained energy into a lever motion, pulling 2 nucleotides of DNA out of the RuvA tetramer per ATP hydrolyzed, thus driving DNA branch migration. The RuvB motors rotate together with the DNA substrate, which together with the progressing nucleotide cycle form the mechanistic basis for DNA recombination by continuous HJ branch migration. Branch migration allows RuvC to scan DNA until it finds its consensus sequence, where it cleaves and resolves cruciform DNA. The protein is Holliday junction branch migration complex subunit RuvB of Burkholderia ambifaria (strain ATCC BAA-244 / DSM 16087 / CCUG 44356 / LMG 19182 / AMMD) (Burkholderia cepacia (strain AMMD)).